Consider the following 678-residue polypeptide: Methionine--tRNA ligase (678 aa).

A 'HIGH' region motif is present at residues 12–22; that stretch reads PYANGPIHLGH. Zn(2+)-binding residues include Cys-143, Cys-146, Cys-156, and Cys-159. The 'KMSKS' region motif lies at 328-332; the sequence is KMSKS. Residue Lys-331 coordinates ATP. The tRNA-binding domain occupies 577–678; that stretch reads DFSKVDLRIA…SGAQPGMRVK (102 aa).

Belongs to the class-I aminoacyl-tRNA synthetase family. MetG type 1 subfamily. Homodimer. Zn(2+) serves as cofactor.

It localises to the cytoplasm. The catalysed reaction is tRNA(Met) + L-methionine + ATP = L-methionyl-tRNA(Met) + AMP + diphosphate. Is required not only for elongation of protein synthesis but also for the initiation of all mRNA translation through initiator tRNA(fMet) aminoacylation. This Acidithiobacillus ferrooxidans (strain ATCC 23270 / DSM 14882 / CIP 104768 / NCIMB 8455) (Ferrobacillus ferrooxidans (strain ATCC 23270)) protein is Methionine--tRNA ligase.